Here is a 421-residue protein sequence, read N- to C-terminus: MHDAVTRPTPPADATAWPRRITQAVKIGGVTVGGGHPVVVQSMTNTDTADIAGSVKQVADLWRAGSEMVRLTVNNAESAAAIPRIVDKLRMMGIDVPLIGDFHYNGHQLLAAEPACAEALAKYRINPGNVGFGKKKDLQFGQLIECAIKYDKPVRIGANWGSLDQSLAAQLMDENAQRETPWDAGRVLREALIRSALDSAERAVELGLPRERIILSAKVSGVQELIAVYRDMASRCDFALHLGLTEAGIGSKGIVASAAALSVLLQQGIGDTIRISLTPEPGQSRTHEVIVAQELLQTTGQRAFTPMVTACPGCGRTTSEFFQELAGVVQNHVRAKMPEWKITNPGAENMTLAVMGCVVNGPGESRHANIGISLPGTGEAPSAPVFIDGEKSVILRGENIAQEFIGLIDQYVERTYARRAG.

The [4Fe-4S] cluster site is built by cysteine 311, cysteine 314, cysteine 357, and glutamate 364.

Belongs to the IspG family. [4Fe-4S] cluster is required as a cofactor.

It catalyses the reaction (2E)-4-hydroxy-3-methylbut-2-enyl diphosphate + oxidized [flavodoxin] + H2O + 2 H(+) = 2-C-methyl-D-erythritol 2,4-cyclic diphosphate + reduced [flavodoxin]. Its pathway is isoprenoid biosynthesis; isopentenyl diphosphate biosynthesis via DXP pathway; isopentenyl diphosphate from 1-deoxy-D-xylulose 5-phosphate: step 5/6. Converts 2C-methyl-D-erythritol 2,4-cyclodiphosphate (ME-2,4cPP) into 1-hydroxy-2-methyl-2-(E)-butenyl 4-diphosphate. The protein is 4-hydroxy-3-methylbut-2-en-1-yl diphosphate synthase (flavodoxin) of Xanthomonas oryzae pv. oryzae (strain KACC10331 / KXO85).